A 141-amino-acid chain; its full sequence is uncharacterized protein (141 aa).

2 helical membrane passes run 20-42 (FLVN…FCLA) and 52-74 (LHLC…IFTL).

The protein resides in the cell membrane. This is an uncharacterized protein from Archaeoglobus fulgidus (strain ATCC 49558 / DSM 4304 / JCM 9628 / NBRC 100126 / VC-16).